The primary structure comprises 176 residues: Flavodoxin (176 aa).

A Flavodoxin-like domain is found at isoleucine 4–lysine 172.

It belongs to the flavodoxin family. FMN serves as cofactor.

Its function is as follows. Low-potential electron donor to a number of redox enzymes. NifF is the electron donor to nitrogenase. This Klebsiella pneumoniae protein is Flavodoxin (nifF).